A 315-amino-acid polypeptide reads, in one-letter code: Acetyl-coenzyme A carboxylase carboxyl transferase subunit alpha (315 aa).

Residues 36 to 289 (LGKKRLELME…RKAVAAELKV (254 aa)) enclose the CoA carboxyltransferase C-terminal domain.

This sequence belongs to the AccA family. As to quaternary structure, acetyl-CoA carboxylase is a heterohexamer composed of biotin carboxyl carrier protein (AccB), biotin carboxylase (AccC) and two subunits each of ACCase subunit alpha (AccA) and ACCase subunit beta (AccD).

It is found in the cytoplasm. The enzyme catalyses N(6)-carboxybiotinyl-L-lysyl-[protein] + acetyl-CoA = N(6)-biotinyl-L-lysyl-[protein] + malonyl-CoA. It functions in the pathway lipid metabolism; malonyl-CoA biosynthesis; malonyl-CoA from acetyl-CoA: step 1/1. Functionally, component of the acetyl coenzyme A carboxylase (ACC) complex. First, biotin carboxylase catalyzes the carboxylation of biotin on its carrier protein (BCCP) and then the CO(2) group is transferred by the carboxyltransferase to acetyl-CoA to form malonyl-CoA. The protein is Acetyl-coenzyme A carboxylase carboxyl transferase subunit alpha of Francisella philomiragia subsp. philomiragia (strain ATCC 25017 / CCUG 19701 / FSC 153 / O#319-036).